Here is a 354-residue protein sequence, read N- to C-terminus: MRVTDFSFELPESLIAHYPQPERSRCRLLSLEGPTGALTHGTFTDLLDKLNPGDLLVFNNTRVIPARLFGRKASGGKIEVLVERMLDDKRILAHIRASKAPKPGTELLLGDDESIHATMTARHGALFEVEFNDPRPVLDILNAIGHMPLPPYIDRPDEDADRELYQTVYSEKPGAVAAPTAGLHFDEPLLAALREKGVEMAFVTLHVGAGTFQPVRVDTIEDHIMHSEYAEVPQEVVDAVLAAKARGNRVIAVGTTSVRSLESAAQAAKSDLIEPFFGDTQIFIYPGYQYKVIDALITNFHLPESTLIMLVSAFAGYQHTMNAYKTAVEQKYRFFSYGDAMFITCNPQAISERP.

This sequence belongs to the QueA family. Monomer.

The protein localises to the cytoplasm. The enzyme catalyses 7-aminomethyl-7-carbaguanosine(34) in tRNA + S-adenosyl-L-methionine = epoxyqueuosine(34) in tRNA + adenine + L-methionine + 2 H(+). It participates in tRNA modification; tRNA-queuosine biosynthesis. Transfers and isomerizes the ribose moiety from AdoMet to the 7-aminomethyl group of 7-deazaguanine (preQ1-tRNA) to give epoxyqueuosine (oQ-tRNA). The sequence is that of S-adenosylmethionine:tRNA ribosyltransferase-isomerase from Salmonella typhi.